The following is a 141-amino-acid chain: Deoxyuridine 5'-triphosphate nucleotidohydrolase (141 aa).

It belongs to the dUTPase family. Requires Mg(2+) as cofactor.

It catalyses the reaction dUTP + H2O = dUMP + diphosphate + H(+). It participates in pyrimidine metabolism; dUMP biosynthesis; dUMP from dCTP (dUTP route): step 2/2. This enzyme is involved in nucleotide metabolism: it produces dUMP, the immediate precursor of thymidine nucleotides and it decreases the intracellular concentration of dUTP so that uracil cannot be incorporated into DNA. This is Deoxyuridine 5'-triphosphate nucleotidohydrolase from Chlorella (PBCV-1).